Consider the following 615-residue polypeptide: Zinc finger protein 653 (615 aa).

4 disordered regions span residues 1–48, 95–117, 176–236, and 401–432; these read MAER…ARRR, RSGR…KRRR, PLSD…SSGL, and EEKE…ELDG. The Nuclear localization signal motif lies at 107 to 118; that stretch reads PKKPKRKKRRRR. Residues 108 to 117 show a composition bias toward basic residues; that stretch reads KKPKRKKRRR. The span at 193 to 205 shows a compositional bias: low complexity; sequence AGSSDSSSSGSAS. Polar residues predominate over residues 226–236; sequence TPTSPVGSSGL. Acidic residues predominate over residues 419 to 432; that stretch reads AEPEAEADGEELDG. Positions 445 to 451 match the Nuclear localization signal motif; the sequence is EPEKRRR. 5 consecutive C2H2-type zinc fingers follow at residues 467–492, 498–522, 528–550, 556–578, and 586–609; these read FHCP…NLVH, KVCP…MIIH, FTCE…RRTH, LQCE…MKKH, and FTCD…LKSH.

The protein belongs to the krueppel C2H2-type zinc-finger protein family. Interacts with NR5A1. In terms of tissue distribution, highly expressed in testis, cerebellum, temporal lobe, hippocampus and the adrenal gland. Moderately expressed in spleen, uterus, thymus, pancreas, kidney, stomach and rectum.

It localises to the nucleus. In terms of biological role, transcriptional repressor. May repress NR5A1, PPARG, NR1H3, NR4A2, ESR1 and NR3C1 transcriptional activity. In Homo sapiens (Human), this protein is Zinc finger protein 653 (ZNF653).